We begin with the raw amino-acid sequence, 344 residues long: Phosphoribosylformylglycinamidine cyclo-ligase (344 aa).

It belongs to the AIR synthase family.

It localises to the cytoplasm. The enzyme catalyses 2-formamido-N(1)-(5-O-phospho-beta-D-ribosyl)acetamidine + ATP = 5-amino-1-(5-phospho-beta-D-ribosyl)imidazole + ADP + phosphate + H(+). The protein operates within purine metabolism; IMP biosynthesis via de novo pathway; 5-amino-1-(5-phospho-D-ribosyl)imidazole from N(2)-formyl-N(1)-(5-phospho-D-ribosyl)glycinamide: step 2/2. In Neisseria gonorrhoeae (strain ATCC 700825 / FA 1090), this protein is Phosphoribosylformylglycinamidine cyclo-ligase.